We begin with the raw amino-acid sequence, 95 residues long: Neurexophilin-3 (95 aa).

N1 and N7 each carry an N-linked (GlcNAc...) asparagine glycan. The interval 1–21 (NATGQGNISISLVPPSKAVEX) is III. The segment at 22 to 30 (HQXQQIFIE) is IV (linker domain). The v (Cys-rich) stretch occupies residues 31–95 (AKASKIFNCR…YIAFYSTDYR (65 aa)).

It belongs to the neurexophilin family.

The protein resides in the secreted. Functionally, may be signaling molecules that resemble neuropeptides. Ligand for alpha-neurexins. In Macaca mulatta (Rhesus macaque), this protein is Neurexophilin-3 (NXPH3).